A 238-amino-acid chain; its full sequence is Ribonuclease PH (238 aa).

Phosphate is bound by residues R86 and 124–126 (GTR).

It belongs to the RNase PH family. Homohexameric ring arranged as a trimer of dimers.

It carries out the reaction tRNA(n+1) + phosphate = tRNA(n) + a ribonucleoside 5'-diphosphate. In terms of biological role, phosphorolytic 3'-5' exoribonuclease that plays an important role in tRNA 3'-end maturation. Removes nucleotide residues following the 3'-CCA terminus of tRNAs; can also add nucleotides to the ends of RNA molecules by using nucleoside diphosphates as substrates, but this may not be physiologically important. Probably plays a role in initiation of 16S rRNA degradation (leading to ribosome degradation) during starvation. The protein is Ribonuclease PH of Haemophilus influenzae (strain 86-028NP).